The sequence spans 206 residues: Urease accessory protein UreG (206 aa).

Gly11–Thr18 is a binding site for GTP.

This sequence belongs to the SIMIBI class G3E GTPase family. UreG subfamily. In terms of assembly, homodimer. UreD, UreF and UreG form a complex that acts as a GTP-hydrolysis-dependent molecular chaperone, activating the urease apoprotein by helping to assemble the nickel containing metallocenter of UreC. The UreE protein probably delivers the nickel.

The protein resides in the cytoplasm. Its function is as follows. Facilitates the functional incorporation of the urease nickel metallocenter. This process requires GTP hydrolysis, probably effectuated by UreG. This chain is Urease accessory protein UreG, found in Mycolicibacterium gilvum (strain PYR-GCK) (Mycobacterium gilvum (strain PYR-GCK)).